Consider the following 255-residue polypeptide: Imidazole glycerol phosphate synthase subunit HisF (255 aa).

Catalysis depends on residues aspartate 11 and aspartate 130.

This sequence belongs to the HisA/HisF family. In terms of assembly, heterodimer of HisH and HisF.

Its subcellular location is the cytoplasm. The enzyme catalyses 5-[(5-phospho-1-deoxy-D-ribulos-1-ylimino)methylamino]-1-(5-phospho-beta-D-ribosyl)imidazole-4-carboxamide + L-glutamine = D-erythro-1-(imidazol-4-yl)glycerol 3-phosphate + 5-amino-1-(5-phospho-beta-D-ribosyl)imidazole-4-carboxamide + L-glutamate + H(+). The protein operates within amino-acid biosynthesis; L-histidine biosynthesis; L-histidine from 5-phospho-alpha-D-ribose 1-diphosphate: step 5/9. In terms of biological role, IGPS catalyzes the conversion of PRFAR and glutamine to IGP, AICAR and glutamate. The HisF subunit catalyzes the cyclization activity that produces IGP and AICAR from PRFAR using the ammonia provided by the HisH subunit. The chain is Imidazole glycerol phosphate synthase subunit HisF from Maricaulis maris (strain MCS10) (Caulobacter maris).